A 127-amino-acid chain; its full sequence is Protein chibby homolog 1 (127 aa).

Residues 1–25 (MPLFGSIFSPKKTPPRKSASLSNLH) are disordered. Phosphoserine occurs at positions 9 and 20. A minimal region for the interaction with PKD2 region spans residues 60–112 (VADSVISGGVDRRETQRLRKRNQQLEEENNLLRLKVDILLDMLSETTAESHLK). Residues 68–110 (GVDRRETQRLRKRNQQLEEENNLLRLKVDILLDMLSETTAESH) are a coiled coil. The segment at 77-98 (LRKRNQQLEEENNLLRLKVDIL) is leucine-zipper; mediates homodimerization.

This sequence belongs to the chibby family. In terms of assembly, homodimer. Homodimerization is essential for nuclear localization and interaction with KPNA4 but is dispensable for interaction with CTNNB1. Interacts with polycystin-2/PKD2 and GM130. Interacts with the C-terminal region of CTNNB1. Interacts (C-terminus) with TCIM (C-terminus), TCIM competes with CTNNB1 for the interaction with CBY1. Interacts with FAM92A; this interaction facilitates targeting of FAM92A to cilium basal body. Interacts with CIBAR2. Interacts with KPNA4.

Its subcellular location is the nucleus speckle. It localises to the cytoplasm. The protein localises to the cytoskeleton. The protein resides in the cilium basal body. It is found in the microtubule organizing center. Its subcellular location is the centrosome. It localises to the centriole. The protein localises to the golgi apparatus. The protein resides in the trans-Golgi network. It is found in the cell projection. Its subcellular location is the cilium. It localises to the flagellum. The protein localises to the nucleus. Its function is as follows. Inhibits the Wnt/Wingless pathway by binding to CTNNB1/beta-catenin and inhibiting beta-catenin-mediated transcriptional activation through competition with TCF/LEF transcription factors. Has also been shown to play a role in regulating the intracellular trafficking of polycystin-2/PKD2 and possibly of other intracellular proteins. Promotes adipocyte and cardiomyocyte differentiation. The protein is Protein chibby homolog 1 (Cby1) of Rattus norvegicus (Rat).